We begin with the raw amino-acid sequence, 125 residues long: Small ribosomal subunit protein uS12c (125 aa).

Residues 1–23 are disordered; the sequence is MPTLEHLTRSPRKKIKRKTKSPA. Basic residues predominate over residues 9–20; the sequence is RSPRKKIKRKTK.

The protein belongs to the universal ribosomal protein uS12 family. Part of the 30S ribosomal subunit.

It is found in the plastid. The protein resides in the chloroplast. In terms of biological role, with S4 and S5 plays an important role in translational accuracy. Located at the interface of the 30S and 50S subunits. The sequence is that of Small ribosomal subunit protein uS12c (rps12) from Euglena gracilis.